Here is a 380-residue protein sequence, read N- to C-terminus: Crotonobetainyl-CoA reductase (380 aa).

This sequence belongs to the acyl-CoA dehydrogenase family. As to quaternary structure, homotetramer. It depends on FAD as a cofactor.

Its subcellular location is the cytoplasm. It catalyses the reaction 4-(trimethylamino)butanoyl-CoA + oxidized [electron-transfer flavoprotein] + H(+) = crotonobetainyl-CoA + reduced [electron-transfer flavoprotein]. Its pathway is amine and polyamine metabolism; carnitine metabolism. In terms of biological role, catalyzes the reduction of crotonobetainyl-CoA to gamma-butyrobetainyl-CoA. In Citrobacter koseri (strain ATCC BAA-895 / CDC 4225-83 / SGSC4696), this protein is Crotonobetainyl-CoA reductase.